Here is a 193-residue protein sequence, read N- to C-terminus: Putative manganese efflux pump MntP (193 aa).

6 helical membrane-spanning segments follow: residues 3-23 (PLSI…AAIG), 37-57 (VRAG…GWML), 66-86 (AAFD…HMIV), 109-131 (LALA…SLAF), 146-166 (CTLS…ALIG), and 171-191 (ILGG…HLSG).

This sequence belongs to the MntP (TC 9.B.29) family.

The protein resides in the cell inner membrane. In terms of biological role, probably functions as a manganese efflux pump. This chain is Putative manganese efflux pump MntP, found in Xanthomonas campestris pv. campestris (strain 8004).